We begin with the raw amino-acid sequence, 357 residues long: Holliday junction branch migration complex subunit RuvB (357 aa).

Residues 4–195 (TDKLAAKAVS…FGIVARLEFY (192 aa)) are large ATPase domain (RuvB-L). ATP is bound by residues Leu-34, Arg-35, Gly-76, Lys-79, Thr-80, Thr-81, 142–144 (EDY), Arg-185, Tyr-195, and Arg-232. A Mg(2+)-binding site is contributed by Thr-80. Residues 196 to 266 (TPAELAKIVT…VADAALAMLD (71 aa)) are small ATPAse domain (RuvB-S). Positions 269 to 357 (AVGFDLMDRK…PVRDLWDDNQ (89 aa)) are head domain (RuvB-H). DNA contacts are provided by Arg-305, Arg-324, and Arg-329.

The protein belongs to the RuvB family. As to quaternary structure, homohexamer. Forms an RuvA(8)-RuvB(12)-Holliday junction (HJ) complex. HJ DNA is sandwiched between 2 RuvA tetramers; dsDNA enters through RuvA and exits via RuvB. An RuvB hexamer assembles on each DNA strand where it exits the tetramer. Each RuvB hexamer is contacted by two RuvA subunits (via domain III) on 2 adjacent RuvB subunits; this complex drives branch migration. In the full resolvosome a probable DNA-RuvA(4)-RuvB(12)-RuvC(2) complex forms which resolves the HJ.

The protein localises to the cytoplasm. It carries out the reaction ATP + H2O = ADP + phosphate + H(+). In terms of biological role, the RuvA-RuvB-RuvC complex processes Holliday junction (HJ) DNA during genetic recombination and DNA repair, while the RuvA-RuvB complex plays an important role in the rescue of blocked DNA replication forks via replication fork reversal (RFR). RuvA specifically binds to HJ cruciform DNA, conferring on it an open structure. The RuvB hexamer acts as an ATP-dependent pump, pulling dsDNA into and through the RuvAB complex. RuvB forms 2 homohexamers on either side of HJ DNA bound by 1 or 2 RuvA tetramers; 4 subunits per hexamer contact DNA at a time. Coordinated motions by a converter formed by DNA-disengaged RuvB subunits stimulates ATP hydrolysis and nucleotide exchange. Immobilization of the converter enables RuvB to convert the ATP-contained energy into a lever motion, pulling 2 nucleotides of DNA out of the RuvA tetramer per ATP hydrolyzed, thus driving DNA branch migration. The RuvB motors rotate together with the DNA substrate, which together with the progressing nucleotide cycle form the mechanistic basis for DNA recombination by continuous HJ branch migration. Branch migration allows RuvC to scan DNA until it finds its consensus sequence, where it cleaves and resolves cruciform DNA. In Ralstonia pickettii (strain 12J), this protein is Holliday junction branch migration complex subunit RuvB.